The sequence spans 735 residues: E3 UFM1-protein ligase 1 homolog (735 aa).

Positions 389–445 (RLEAEKKKQGGAKAAVKVQEETDDWGDGKKGGKGGKKNAKSVKGGSKSSAPSTSSNL) are disordered. The span at 419 to 428 (GGKGGKKNAK) shows a compositional bias: basic residues. Over residues 429–445 (SVKGGSKSSAPSTSSNL) the composition is skewed to low complexity.

Belongs to the UFL1 family.

E3 UFM1-protein ligase that mediates ufmylation of target proteins. The chain is E3 UFM1-protein ligase 1 homolog (ufl-1) from Caenorhabditis elegans.